The following is a 396-amino-acid chain: Phosphoglycerate kinase (396 aa).

Substrate-binding positions include 21–23, R37, 60–63, R121, and R154; these read DFN and HLGR. Residues K205, G296, E327, and 353–356 contribute to the ATP site; that span reads GGDS.

Belongs to the phosphoglycerate kinase family. In terms of assembly, monomer.

It is found in the cytoplasm. It catalyses the reaction (2R)-3-phosphoglycerate + ATP = (2R)-3-phospho-glyceroyl phosphate + ADP. It functions in the pathway carbohydrate degradation; glycolysis; pyruvate from D-glyceraldehyde 3-phosphate: step 2/5. This Anaeromyxobacter sp. (strain Fw109-5) protein is Phosphoglycerate kinase.